Reading from the N-terminus, the 473-residue chain is Rop guanine nucleotide exchange factor 3 (473 aa).

The tract at residues 1–28 (MENLSNPDENDDHQSPRSIDQNDQSAVE) is disordered. Positions 16–28 (PRSIDQNDQSAVE) are enriched in polar residues. In terms of domain architecture, PRONE spans 95-473 (LVVQEISEPE…YVDKTMRGSE (379 aa)).

Functionally, guanine-nucleotide exchange factor (GEF) that acts as an activator of Rop (Rho of plants) GTPases by promoting the exchange of GDP for GTP. The chain is Rop guanine nucleotide exchange factor 3 (ROPGEF3) from Arabidopsis thaliana (Mouse-ear cress).